A 129-amino-acid polypeptide reads, in one-letter code: M-zodatoxin-Lt8d (129 aa).

Positions 1–20 (MKYFVVALALVAAFACIAES) are cleaved as a signal peptide. Residues 21–60 (KPAESEHELAEVEEENELADLEDAVWLEHLADLSDLEEAR) constitute a propeptide that is removed on maturation. Residues 57–60 (EEAR) carry the Processing quadruplet motif motif.

In terms of processing, cleavage of the propeptide depends on the processing quadruplet motif (XXXR, with at least one of X being E). Expressed by the venom gland.

The protein localises to the secreted. Functionally, insecticidal, cytolytic and antimicrobial peptide. Forms voltage-dependent, ion-permeable channels in membranes. At high concentration causes cell membrane lysis. The sequence is that of M-zodatoxin-Lt8d (cit 1-4) from Lachesana tarabaevi (Spider).